Here is a 296-residue protein sequence, read N- to C-terminus: Putative thiosulfate sulfurtransferase SseA (296 aa).

Rhodanese domains follow at residues 31-138 (GKPG…DTSL) and 168-286 (ILGT…VPIT). Cys245 (cysteine persulfide intermediate) is an active-site residue. Arg250 is a binding site for substrate.

The catalysed reaction is thiosulfate + hydrogen cyanide = thiocyanate + sulfite + 2 H(+). This Mycobacterium leprae (strain TN) protein is Putative thiosulfate sulfurtransferase SseA (sseA).